A 124-amino-acid chain; its full sequence is U-scoloptoxin-Er5d (124 aa).

Residues 1 to 22 (MKTNCEFPLLCLLIVLVANVEG) form the signal peptide. Positions 23 to 94 (EVEDNELKMV…KRLWRNWERR (72 aa)) are excised as a propeptide. RLWRNWE repeat units lie at residues 34-40 (RLWRNWE), 61-67 (RLWRNWE), and 86-92 (RLWRNWE). At glutamine 95 the chain carries Pyrrolidone carboxylic acid. An RLWRNWE 4; approximate repeat occupies 107–113 (ELWRNWE). The propeptide occupies 112 to 124 (WEDLKRRQVGRFE).

The protein belongs to the scoloptoxin-08 family. In terms of tissue distribution, expressed by the venom gland.

It localises to the secreted. This Ethmostigmus rubripes (Giant centipede) protein is U-scoloptoxin-Er5d.